A 92-amino-acid chain; its full sequence is Defensin-like protein 226 (92 aa).

Residues 1–27 (MKCGVLFMISCLLITFLVLSHVREVES) form the signal peptide. 4 disulfides stabilise this stretch: cysteine 33–cysteine 92, cysteine 43–cysteine 71, cysteine 51–cysteine 86, and cysteine 69–cysteine 88.

It belongs to the DEFL family.

It localises to the secreted. The sequence is that of Defensin-like protein 226 (SCRL2) from Arabidopsis thaliana (Mouse-ear cress).